We begin with the raw amino-acid sequence, 94 residues long: Co-chaperonin GroES (94 aa).

This sequence belongs to the GroES chaperonin family. In terms of assembly, heptamer of 7 subunits arranged in a ring. Interacts with the chaperonin GroEL.

The protein localises to the cytoplasm. In terms of biological role, together with the chaperonin GroEL, plays an essential role in assisting protein folding. The GroEL-GroES system forms a nano-cage that allows encapsulation of the non-native substrate proteins and provides a physical environment optimized to promote and accelerate protein folding. GroES binds to the apical surface of the GroEL ring, thereby capping the opening of the GroEL channel. This chain is Co-chaperonin GroES, found in Lactococcus lactis subsp. cremoris (strain MG1363).